The primary structure comprises 306 residues: Cathepsin Z (306 aa).

An N-terminal signal peptide occupies residues 1–20; the sequence is MLAILFNFFLLTYFTNITLG. Residues 21–65 constitute a propeptide, activation peptide; that stretch reads KVGKSIDLDTRNGYNVHGCYKQTGKIYAHKTYPRQYEAENYNFDD. 5 disulfide bridges follow: Cys-39/Cys-96, Cys-93/Cys-136, Cys-130/Cys-168, Cys-158/Cys-174, and Cys-177/Cys-182. Cys-96 is an active-site residue. Asn-187 carries an N-linked (GlcNAc...) asparagine glycan. A disulfide bond links Cys-217 and Cys-299. Catalysis depends on residues His-243 and Asn-265. Asn-286 is a glycosylation site (N-linked (GlcNAc...) asparagine).

Belongs to the peptidase C1 family.

The protein localises to the cytoplasmic vesicle. The protein resides in the secretory vesicle. It is found in the secreted. It carries out the reaction Release of C-terminal amino acid residues with broad specificity, but lacks action on C-terminal proline. Shows weak endopeptidase activity.. With respect to regulation, the disulfide bridge formed between Cys-39 in the propeptide and the active site residue Cys-96 may prevent activation of the zymogen through formation of a reversible covalent bond with the active site residue. In terms of biological role, exhibits carboxy-monopeptidase as well as carboxy-dipeptidase activity. Plays an essential role in molting, a process during larval stages in which a new cuticle is formed and the old cuticle is shed. Required for the degradation and shedding of the old cuticle. The protein is Cathepsin Z of Onchocerca volvulus.